Reading from the N-terminus, the 133-residue chain is Oocytes ribonuclease (133 aa).

The N-terminal stretch at 1 to 22 (MCAKSLLLVFGILLGLSHLSLS) is a signal peptide. Glutamine 23 is subject to Pyrrolidone carboxylic acid. Histidine 32 serves as the catalytic Proton acceptor. 4 cysteine pairs are disulfide-bonded: cysteine 41–cysteine 93, cysteine 56–cysteine 103, cysteine 74–cysteine 118, and cysteine 115–cysteine 132. Residue 57 to 61 (KRVNT) coordinates substrate. Histidine 125 functions as the Proton donor in the catalytic mechanism.

This sequence belongs to the pancreatic ribonuclease family. As to quaternary structure, monomer.

The protein localises to the secreted. In terms of biological role, preferentially cleaves single-stranded RNA at pyrimidine residues with a 3'flanking guanine. Hydrolyzes poly(U) and poly(C) as substrates, and prefers the former. The S-lectins in frog eggs may be involved in the fertilization and development of the frog embryo. This lectin agglutinates various animal cells, including normal lymphocytes, erythrocytes, and fibroblasts of animal and human origin. It is cytotoxic against several tumor cells. The sequence is that of Oocytes ribonuclease (RCR) from Aquarana catesbeiana (American bullfrog).